Reading from the N-terminus, the 235-residue chain is 6-carboxyhexanoate--CoA ligase (235 aa).

The protein belongs to the BioW family. Homodimer. The cofactor is Mg(2+).

The catalysed reaction is heptanedioate + ATP + CoA = 6-carboxyhexanoyl-CoA + AMP + diphosphate. The protein operates within metabolic intermediate metabolism; pimeloyl-CoA biosynthesis; pimeloyl-CoA from pimelate: step 1/1. In terms of biological role, catalyzes the transformation of pimelate into pimeloyl-CoA with concomitant hydrolysis of ATP to AMP. This chain is 6-carboxyhexanoate--CoA ligase, found in Desulfovibrio desulfuricans (strain ATCC 27774 / DSM 6949 / MB).